Here is a 720-residue protein sequence, read N- to C-terminus: MRVDELRVDERIKSTLKERGIESFYPPQAEALKSGILEGKNALISIPTASGKTLIAEIAMVHRILTQGGKAVYIVPLKALAEEKFQEFQDWEKIGLRVAMATGDYDSKDEWLGKYDIIIATAEKFDSLLRHGSSWIKDVKILVADEIHLIGSRDRGATLEVILAHMLGKAQIIGLSATIGNPEELAEWLNAELIVSDWRPVKLRRGVFYQGFVTWEDGSIDRFSSWEELVYDAIRKKKGALIFVNMRRKAERVALELSKKVKSLLTKPEIRALNELADSLEENPTNEKLAKAIRGGVAFHHAGLGRDERVLVEENFRKGIIKAVVATPTLSAGINTPAFRVIIRDIWRYSDFGMERIPIIEVHQMLGRAGRPKYDEVGEGIIVSTSDDPREVMNHYIFGKPEKLFSQLSNESNLRSQVLALIATFGYSTVEEILKFISNTFYAYQRKDTYSLEEKIRNILYFLLENEFIEISLEDKIRPLSLGIRTAKLYIDPYTAKMFKDKMEEVVKDPNPIGIFHLISLTPDITPFNYSKREFERLEEEYYEFKDRLYFDDPYISGYDPYLERKFFRAFKTALVLLAWINEVPEGEIVEKYSVEPGDIYRIVETAEWLVYSLKEIAKVLGAYEIVDYLETLRVRVKYGIREELIPLMQLPLVGRRRARALYNSGFRSIEDISQARPEELLKIEGIGVKTVEAIFKFLGKNVKISEKPRKSTLDYFLKS.

ATP contacts are provided by residues S23, Q28, and 46 to 53 (IPTASGKT). The Helicase ATP-binding domain maps to 33 to 197 (KSGILEGKNA…WLNAELIVSD (165 aa)). The DEAH box motif lies at 145-148 (DEIH). A Helicase C-terminal domain is found at 229 to 422 (LVYDAIRKKK…NLRSQVLALI (194 aa)).

Belongs to the helicase family. Hel308 subfamily. Monomer. Interacts with PCNA. Mg(2+) serves as cofactor. Zn(2+) is required as a cofactor.

It catalyses the reaction Couples ATP hydrolysis with the unwinding of duplex DNA by translocating in the 3'-5' direction.. The catalysed reaction is ATP + H2O = ADP + phosphate + H(+). In terms of biological role, DNA-dependent ATPase and 3'-5' DNA helicase that may be involved in repair of stalled replication forks. Unwinds the lagging strand from forked DNA structures in a 3'-5' direction. PCNA, the DNA polymerase sliding clamp subunit, stimulates the helicase activity, and may alter substrate specificity. Unwinds branched DNA (Holliday junctions) in an ATP-dependent fashion; ss- and dsDNA stimulate ATPase to the greatest extent, although it preferentially binds DNA with a single-stranded region. Processes a RecA-mediated recombination intermediate between gapped circular and homologous linear dsDNA. The sequence is that of ATP-dependent DNA helicase Hel308 from Pyrococcus furiosus (strain ATCC 43587 / DSM 3638 / JCM 8422 / Vc1).